A 277-amino-acid chain; its full sequence is tRNA pseudouridine synthase B (277 aa).

Aspartate 38 acts as the Nucleophile in catalysis.

The protein belongs to the pseudouridine synthase TruB family. Type 1 subfamily.

It catalyses the reaction uridine(55) in tRNA = pseudouridine(55) in tRNA. Functionally, responsible for synthesis of pseudouridine from uracil-55 in the psi GC loop of transfer RNAs. The sequence is that of tRNA pseudouridine synthase B from Sulfurovum sp. (strain NBC37-1).